A 191-amino-acid polypeptide reads, in one-letter code: Cytochrome b-245 light chain (191 aa).

Residues 2–7 (GQIEWA) are Cytoplasmic-facing. A helical membrane pass occupies residues 8–30 (MWANEQALASGLILITGGIVATA). Topologically, residues 31–35 (GQFTQ) are extracellular. Residues 36-53 (WYLGAYSIAAGVLVCLLE) traverse the membrane as a helical segment. Topologically, residues 54–69 (YPRGKRSKGSTMERCG) are cytoplasmic. An intramembrane segment occupies 70–80 (QKYLTRVVKLF). Residues 81 to 86 (GPLTRN) are Cytoplasmic-facing. A helical membrane pass occupies residues 87 to 104 (YYIRAFLHLGLAVPAGFL). Residue leucine 105 is a topological domain, extracellular. A helical transmembrane segment spans residues 106-126 (ATILGTACLAIASGIYLLAAI). Residues 127–191 (RGEQWSPIEP…NPMPVNDEVV (65 aa)) lie on the Cytoplasmic side of the membrane. Residues 134 to 191 (IEPKPKERPQIGGTIKQPPSNPPPRPPAEARKKPSEEAAGVPTGGPQENPMPVNDEVV) form a disordered region. Threonine 147 is subject to Phosphothreonine. Lysine 149 participates in a covalent cross-link: Glycyl lysine isopeptide (Lys-Gly) (interchain with G-Cter in ubiquitin). Serine 168 bears the Phosphoserine mark.

The protein belongs to the p22phox family. Component of the phagocyte NADPH oxidase core complex/cytochrome b558 complex, composed of CYBB (heavy chain (beta)) and CYBA (light chain (alpha)). Component of the phagocyte NADPH oxidase complex composed of an obligatory core heterodimer formed by the membrane proteins CYBA and CYBB and the cytosolic regulatory subunits NCF1/p47-phox, NCF2/p67-phox, NCF4/p40-phox and the small GTPase RAC1 or RAC2. Interacts with NCF1 (via SH3 domain). Interacts with SH3PXD2A. Interacts with DUOX1, DUOX2 and TPO. Interacts with NOX4; this interaction mediates superoxide generation. Interacts with calprotectin (S100A8/9). Interacts with GBP7. Interacts with NOXO1. Forms a heterodimer with NOX3 and is essential for activity and cell membrane localization of NOX3. Interacts with NOX1. In terms of processing, phosphorylation at Thr-147 enhances NADPH oxidase activity by promoting NCF1/p47-phox binding. Post-translationally, ubiquitinated at Lys-149 likely by RNF145.

The protein localises to the cell membrane. In terms of biological role, subunit of NADPH oxidase complexes that is required for the NADPH oxidase activity that generates, in various cell types, superoxide from molecular oxygen utilizing NADPH as an electron donor. Subunit of the phagocyte NADPH oxidase complex that mediates the transfer of electrons from cytosolic NADPH to O2 to produce the superoxide anion (O2(-)). In the activated complex, electrons are first transferred from NADPH to flavin adenine dinucleotide (FAD) and subsequently transferred via two heme molecules to molecular oxygen, producing superoxide through an outer-sphere reaction. Activation of the NADPH oxidase complex is initiated by the assembly of cytosolic subunits of the NADPH oxidase complex with the core NADPH oxidase complex to form a complex at the plasma membrane or phagosomal membrane. This activation process is initiated by phosphorylation dependent binding of the cytosolic NCF1/p47-phox subunit to the C-terminus of CYBA/p22-phox. Aassociates with NOX3 to form a functional NADPH oxidase constitutively generating superoxide. In Bos taurus (Bovine), this protein is Cytochrome b-245 light chain.